The chain runs to 493 residues: Ecdysteroid UDP-glucosyltransferase (493 aa).

An N-terminal signal peptide occupies residues Met1–Thr17.

The protein belongs to the UDP-glycosyltransferase family.

Its function is as follows. Catalyzes the transfer of glucose from UDP-glucose to ecdysteroids which are insect molting hormones. Expression of egt interferes with normal insect development and block molting. In Choristoneura fumiferana defective polyhedrosis virus (Cfdef), this protein is Ecdysteroid UDP-glucosyltransferase (egt).